Here is a 328-residue protein sequence, read N- to C-terminus: DNA-directed RNA polymerase subunit alpha (328 aa).

Positions 1–231 (MIYQMQMPER…EHVSLFANFS (231 aa)) are alpha N-terminal domain (alpha-NTD). Positions 252 to 328 (MRKLLQTRIE…MDITKYQMKS (77 aa)) are alpha C-terminal domain (alpha-CTD).

Belongs to the RNA polymerase alpha chain family. In terms of assembly, homodimer. The RNAP catalytic core consists of 2 alpha, 1 beta, 1 beta' and 1 omega subunit. When a sigma factor is associated with the core the holoenzyme is formed, which can initiate transcription.

It catalyses the reaction RNA(n) + a ribonucleoside 5'-triphosphate = RNA(n+1) + diphosphate. Its function is as follows. DNA-dependent RNA polymerase catalyzes the transcription of DNA into RNA using the four ribonucleoside triphosphates as substrates. The polypeptide is DNA-directed RNA polymerase subunit alpha (Prosthecochloris aestuarii (strain DSM 271 / SK 413)).